The following is a 407-amino-acid chain: Protein trichome birefringence-like 12 (407 aa).

The chain crosses the membrane as a helical; Signal-anchor for type II membrane protein span at residues 21 to 41; the sequence is SLLPRILLLSLLLLLFYSLIL. Positions 130-132 match the GDS motif motif; that stretch reads GDS. The DCXHWCLPGXXDXWN motif signature appears at 379-393; the sequence is DCMHWCLPGVPDTWV.

Belongs to the PC-esterase family. TBL subfamily.

The protein resides in the membrane. In terms of biological role, may act as a bridging protein that binds pectin and other cell wall polysaccharides. Probably involved in maintaining esterification of pectins. May be involved in the specific O-acetylation of cell wall polymers. The polypeptide is Protein trichome birefringence-like 12 (TBL12) (Arabidopsis thaliana (Mouse-ear cress)).